A 240-amino-acid chain; its full sequence is Homeobox protein DLX-4 (240 aa).

Disordered stretches follow at residues 44-70 (DLSYSQSYGHPRSYSHPGPATPGDSYL) and 175-194 (LKQSSGEPEEDFSGRPPSLS). The segment at residues 116 to 175 (LRKPRTIYSSLQLQHLNQRFQHTQYLALPERAQLAAQLGLTQTQVKIWFQNKRSKYKKLL) is a DNA-binding region (homeobox).

Belongs to the distal-less homeobox family. Branchial arches, molar and incisor teeth and limbs.

The protein localises to the nucleus. May play a role in determining the production of hemoglobin S. May act as a repressor. During embryonic development, plays a role in palatogenesis. The polypeptide is Homeobox protein DLX-4 (Dlx4) (Mus musculus (Mouse)).